A 465-amino-acid chain; its full sequence is Phosphatidylserine synthase 1 (465 aa).

Residues M1 to D35 lie on the Cytoplasmic side of the membrane. The chain crosses the membrane as a helical span at residues F36 to F56. The Lumenal segment spans residues A57–N68. The chain crosses the membrane as a helical span at residues I69–P89. Residues N90–R102 lie on the Cytoplasmic side of the membrane. A helical transmembrane segment spans residues M103–V123. The Lumenal segment spans residues E124–Y186. The chain crosses the membrane as a helical span at residues G187–L207. The Cytoplasmic segment spans residues P208–D216. A helical transmembrane segment spans residues Q217 to C237. At R238–R286 the chain is on the lumenal side. A helical membrane pass occupies residues V287–L307. Over K308–L319 the chain is Cytoplasmic. A helical membrane pass occupies residues S320 to L342. Topologically, residues T343–W355 are lumenal. Residues V356 to F376 form a helical membrane-spanning segment. The Cytoplasmic segment spans residues S377–Y383. The helical transmembrane segment at V384–W404 threads the bilayer. Residues Y405–K465 are Lumenal-facing. The disordered stretch occupies residues P440–K465. The segment covering R449 to K465 has biased composition (basic residues).

It belongs to the phosphatidyl serine synthase family.

It localises to the endoplasmic reticulum membrane. The enzyme catalyses a 1,2-diacyl-sn-glycero-3-phosphoethanolamine + L-serine = a 1,2-diacyl-sn-glycero-3-phospho-L-serine + ethanolamine. It carries out the reaction a 1,2-diacyl-sn-glycero-3-phosphocholine + L-serine = a 1,2-diacyl-sn-glycero-3-phospho-L-serine + choline. The protein operates within phospholipid metabolism; phosphatidylserine biosynthesis. Its function is as follows. Catalyzes a base-exchange reaction in which the polar head group of phosphatidylethanolamine (PE) or phosphatidylcholine (PC) is replaced by L-serine. Catalyzes mainly the conversion of phosphatidylcholine but also converts, in vitro and to a lesser extent, phosphatidylethanolamine. The chain is Phosphatidylserine synthase 1 (ptdss1) from Xenopus tropicalis (Western clawed frog).